The primary structure comprises 182 residues: ATP synthase subunit delta, organellar chromatophore (182 aa).

It belongs to the ATPase delta chain family. F-type ATPases have 2 components, F(1) - the catalytic core - and F(0) - the membrane proton channel. F(1) has five subunits: alpha(3), beta(3), gamma(1), delta(1), epsilon(1). CF(0) has four main subunits: a(1), b(1), b'(1) and c(10-14). The alpha and beta chains form an alternating ring which encloses part of the gamma chain. F(1) is attached to F(0) by a central stalk formed by the gamma and epsilon chains, while a peripheral stalk is formed by the delta, b and b' chains.

It localises to the plastid. It is found in the organellar chromatophore thylakoid membrane. In terms of biological role, f(1)F(0) ATP synthase produces ATP from ADP in the presence of a proton or sodium gradient. F-type ATPases consist of two structural domains, F(1) containing the extramembraneous catalytic core and F(0) containing the membrane proton channel, linked together by a central stalk and a peripheral stalk. During catalysis, ATP synthesis in the catalytic domain of F(1) is coupled via a rotary mechanism of the central stalk subunits to proton translocation. Its function is as follows. This protein is part of the stalk that links CF(0) to CF(1). It either transmits conformational changes from CF(0) to CF(1) or is implicated in proton conduction. The sequence is that of ATP synthase subunit delta, organellar chromatophore from Paulinella chromatophora.